Consider the following 414-residue polypeptide: Esterase FrsA (414 aa).

The protein belongs to the FrsA family.

It carries out the reaction a carboxylic ester + H2O = an alcohol + a carboxylate + H(+). Functionally, catalyzes the hydrolysis of esters. This chain is Esterase FrsA, found in Shigella boydii serotype 18 (strain CDC 3083-94 / BS512).